The chain runs to 391 residues: Succinate--CoA ligase [ADP-forming] subunit beta (391 aa).

Residues 9-248 (KDILRKFGVA…ITEEDPFEVE (240 aa)) enclose the ATP-grasp domain. ATP contacts are provided by residues lysine 50, 57–59 (GRG), glutamate 103, methionine 106, and glutamate 111. 2 residues coordinate Mg(2+): asparagine 203 and aspartate 217. Substrate is bound by residues asparagine 268 and 325 to 327 (GIV).

It belongs to the succinate/malate CoA ligase beta subunit family. In terms of assembly, heterotetramer of two alpha and two beta subunits. The cofactor is Mg(2+).

It carries out the reaction succinate + ATP + CoA = succinyl-CoA + ADP + phosphate. The enzyme catalyses GTP + succinate + CoA = succinyl-CoA + GDP + phosphate. Its pathway is carbohydrate metabolism; tricarboxylic acid cycle; succinate from succinyl-CoA (ligase route): step 1/1. In terms of biological role, succinyl-CoA synthetase functions in the citric acid cycle (TCA), coupling the hydrolysis of succinyl-CoA to the synthesis of either ATP or GTP and thus represents the only step of substrate-level phosphorylation in the TCA. The beta subunit provides nucleotide specificity of the enzyme and binds the substrate succinate, while the binding sites for coenzyme A and phosphate are found in the alpha subunit. In Chlorobium phaeovibrioides (strain DSM 265 / 1930) (Prosthecochloris vibrioformis (strain DSM 265)), this protein is Succinate--CoA ligase [ADP-forming] subunit beta.